Consider the following 260-residue polypeptide: Cytochrome c oxidase subunit 2 (260 aa).

At 1–43 the chain is on the mitochondrial intermembrane side; it reads MILRLLECRFFTIALCDAAEPWQLGFQDAATPMMQGIIDLHHD. A helical membrane pass occupies residues 44 to 64; sequence IFFFLILILVFVLWMLVRALW. The Mitochondrial matrix portion of the chain corresponds to 65 to 84; it reads HFNEQTNPIPQRIVHGTTIE. A helical transmembrane segment spans residues 85–105; that stretch reads IIWTIFPSVILLFIAIPSFAL. Residues 106 to 260 lie on the Mitochondrial intermembrane side of the membrane; the sequence is LYSMDGVLVD…VSNQLILQTN (155 aa). The Cu cation site is built by histidine 189, cysteine 224, glutamate 226, cysteine 228, histidine 232, and methionine 235. Glutamate 226 is a binding site for Mg(2+).

It belongs to the cytochrome c oxidase subunit 2 family. As to quaternary structure, component of the cytochrome c oxidase (complex IV, CIV), a multisubunit enzyme composed of a catalytic core of 3 subunits and several supernumerary subunits. The complex exists as a monomer or a dimer and forms supercomplexes (SCs) in the inner mitochondrial membrane with ubiquinol-cytochrome c oxidoreductase (cytochrome b-c1 complex, complex III, CIII). It depends on Cu cation as a cofactor.

The protein resides in the mitochondrion inner membrane. The catalysed reaction is 4 Fe(II)-[cytochrome c] + O2 + 8 H(+)(in) = 4 Fe(III)-[cytochrome c] + 2 H2O + 4 H(+)(out). In terms of biological role, component of the cytochrome c oxidase, the last enzyme in the mitochondrial electron transport chain which drives oxidative phosphorylation. The respiratory chain contains 3 multisubunit complexes succinate dehydrogenase (complex II, CII), ubiquinol-cytochrome c oxidoreductase (cytochrome b-c1 complex, complex III, CIII) and cytochrome c oxidase (complex IV, CIV), that cooperate to transfer electrons derived from NADH and succinate to molecular oxygen, creating an electrochemical gradient over the inner membrane that drives transmembrane transport and the ATP synthase. Cytochrome c oxidase is the component of the respiratory chain that catalyzes the reduction of oxygen to water. Electrons originating from reduced cytochrome c in the intermembrane space (IMS) are transferred via the dinuclear copper A center (CU(A)) of subunit 2 and heme A of subunit 1 to the active site in subunit 1, a binuclear center (BNC) formed by heme A3 and copper B (CU(B)). The BNC reduces molecular oxygen to 2 water molecules using 4 electrons from cytochrome c in the IMS and 4 protons from the mitochondrial matrix. This Zea mays (Maize) protein is Cytochrome c oxidase subunit 2 (COX2).